A 288-amino-acid chain; its full sequence is Small ribosomal subunit protein uS3 (288 aa).

The 69-residue stretch at 38-106 folds into the KH type-2 domain; sequence IRRMMSKGLE…QVQLNIIEVK (69 aa). The segment at 209-288 is disordered; that stretch reads PGRETPAEAP…TQPAETQQEG (80 aa). Basic and acidic residues predominate over residues 219 to 232; the sequence is SRPRRERGDRSERP. Low complexity predominate over residues 249–264; it reads AGRAAATTIAQAAETP. A compositionally biased stretch (polar residues) spans 277–288; sequence AATQPAETQQEG.

Belongs to the universal ribosomal protein uS3 family. Part of the 30S ribosomal subunit. Forms a tight complex with proteins S10 and S14.

In terms of biological role, binds the lower part of the 30S subunit head. Binds mRNA in the 70S ribosome, positioning it for translation. The polypeptide is Small ribosomal subunit protein uS3 (Salinispora arenicola (strain CNS-205)).